The sequence spans 354 residues: Selenide, water dikinase (354 aa).

Residue cysteine 23 is part of the active site. ATP-binding positions include lysine 26 and 54–56 (TAD). Aspartate 57 contributes to the Mg(2+) binding site. Residues aspartate 74, aspartate 97, and 145-147 (GHS) contribute to the ATP site. Aspartate 97 contacts Mg(2+). Mg(2+) is bound at residue aspartate 233.

This sequence belongs to the selenophosphate synthase 1 family. Class I subfamily. In terms of assembly, homodimer. Mg(2+) serves as cofactor.

It carries out the reaction hydrogenselenide + ATP + H2O = selenophosphate + AMP + phosphate + 2 H(+). Its function is as follows. Synthesizes selenophosphate from selenide and ATP. In Paraburkholderia xenovorans (strain LB400), this protein is Selenide, water dikinase.